Consider the following 31-residue polypeptide: Cytochrome b6-f complex subunit 6 (31 aa).

Residues 3-23 (ILIGYIILLACAFGLAAGLFF) traverse the membrane as a helical segment.

It belongs to the PetL family. The 4 large subunits of the cytochrome b6-f complex are cytochrome b6, subunit IV (17 kDa polypeptide, PetD), cytochrome f and the Rieske protein, while the 4 small subunits are PetG, PetL, PetM and PetN. The complex functions as a dimer.

It is found in the plastid. The protein localises to the chloroplast thylakoid membrane. In terms of biological role, component of the cytochrome b6-f complex, which mediates electron transfer between photosystem II (PSII) and photosystem I (PSI), cyclic electron flow around PSI, and state transitions. PetL is important for photoautotrophic growth as well as for electron transfer efficiency and stability of the cytochrome b6-f complex. This chain is Cytochrome b6-f complex subunit 6, found in Rhodomonas salina (Cryptomonas salina).